The sequence spans 341 residues: MGKLELLQTLTGHAGRVWSAAWHPGGKLFASCGEDKTIRVWNKSDTDRWVAQTVLTDGHTRTIRELAWSCCGHYLASASFDTTVAVWDKKSGEFECNATLEGHDNEVKSVTWSRSGNLLATCSRDKSVWIWEIHHAPDQEDEYECVAVLNGHTQDVKKVCWHPQEDLLASASYDNTIRMYRQDLADSEWEMLEPLESHSSTVWSISFDATGQRLASCSEDTTVKVWQQYGPDNALGIPCPDRGTIWKCVCTLSGYHSRSVYDIDWCKQTGLLATACGDDTVRIFREASDSDRNEPTFELVVTVEAHSQDANKVAWHPTVPGLLLTASDDGEIKLWQYVDAD.

7 WD repeats span residues 12-51 (GHAGRVWSAAWHPGGKLFASCGEDKTIRVWNKSDTDRWVA), 58-97 (GHTRTIRELAWSCCGHYLASASFDTTVAVWDKKSGEFECN), 102-141 (GHDNEVKSVTWSRSGNLLATCSRDKSVWIWEIHHAPDQED), 151-190 (GHTQDVKKVCWHPQEDLLASASYDNTIRMYRQDLADSEWE), 197-236 (SHSSTVWSISFDATGQRLASCSEDTTVKVWQQYGPDNALG), 255-294 (YHSRSVYDIDWCKQTGLLATACGDDTVRIFREASDSDRNE), and 305-341 (AHSQDANKVAWHPTVPGLLLTASDDGEIKLWQYVDAD).

Belongs to the WD repeat CIA1 family.

Its function is as follows. Essential component of the cytosolic iron-sulfur (Fe/S) protein assembly machinery. Required for the maturation of extramitochondrial Fe/S proteins. The polypeptide is Probable cytosolic iron-sulfur protein assembly protein Ciao1 (Anopheles gambiae (African malaria mosquito)).